Reading from the N-terminus, the 181-residue chain is Malignant T-cell-amplified sequence 2 (181 aa).

Residues 92–171 (LPHQQVDKGA…IGIENIHYLN (80 aa)) enclose the PUA domain.

This sequence belongs to the MCTS1 family.

The protein localises to the cytoplasm. The sequence is that of Malignant T-cell-amplified sequence 2 from Mus musculus (Mouse).